The primary structure comprises 331 residues: LIM/homeobox protein Lhx9 (331 aa).

2 consecutive LIM zinc-binding domains span residues 71–132 (TLCA…FSVK) and 133–194 (RCAR…LVQG). The tract at residues 253-275 (ETDLDRDQTYPPSQKTKRMRTSF) is disordered. The segment at residues 268–327 (TKRMRTSFKHHQLRTMKSYFAINHNPDAKDLKQLAQKTGLTKRVLQGEQCSGFNSHTTRR) is a DNA-binding region (homeobox).

The protein resides in the nucleus. Its function is as follows. May be involved in gonadal development. In Xenopus laevis (African clawed frog), this protein is LIM/homeobox protein Lhx9 (lhx9).